The primary structure comprises 358 residues: L-Ala-D/L-Glu epimerase (358 aa).

Substrate-binding residues include R24, T135, and K160. K162 serves as the catalytic Proton acceptor; specific for (R)-substrate epimerization. Residues D190, E218, and D243 each coordinate Mg(2+). K267 functions as the Proton acceptor; specific for (S)-substrate epimerization in the catalytic mechanism. Residues C295, D320, and D322 each coordinate substrate.

The protein belongs to the mandelate racemase/muconate lactonizing enzyme family. Mg(2+) serves as cofactor.

The catalysed reaction is L-alanyl-L-glutamate = L-alanyl-D-glutamate. It functions in the pathway cell wall degradation; peptidoglycan degradation. Its function is as follows. Catalyzes the epimerization of L-Ala-D-Glu to L-Ala-L-Glu and has probably a role in the metabolism of the murein peptide, of which L-Ala-D-Glu is a component. Is also able to catalyze the epimerization of L-Ala-D-Asp. In Clostridium acetobutylicum (strain ATCC 824 / DSM 792 / JCM 1419 / IAM 19013 / LMG 5710 / NBRC 13948 / NRRL B-527 / VKM B-1787 / 2291 / W), this protein is L-Ala-D/L-Glu epimerase.